The following is a 360-amino-acid chain: Peptide chain release factor 1 (360 aa).

N5-methylglutamine is present on Gln235. Residues 284–293 (QRRQQEESST) are compositionally biased toward basic and acidic residues. The segment at 284-311 (QRRQQEESSTRRNLLGSGDRSDRIRTYN) is disordered.

It belongs to the prokaryotic/mitochondrial release factor family. In terms of processing, methylated by PrmC. Methylation increases the termination efficiency of RF1.

Its subcellular location is the cytoplasm. In terms of biological role, peptide chain release factor 1 directs the termination of translation in response to the peptide chain termination codons UAG and UAA. This Sodalis glossinidius (strain morsitans) protein is Peptide chain release factor 1.